A 278-amino-acid chain; its full sequence is Large ribosomal subunit protein uL2 (278 aa).

Disordered stretches follow at residues 1-20 (MGIRKYKPTTPGRRGASVSD), 25-58 (TRSTPEKSLVRPLHGKGGRNAHGRITTRHKGGGH), and 223-278 (GVVM…GKKR). Over residues 37–58 (LHGKGGRNAHGRITTRHKGGGH) the composition is skewed to basic residues. Over residues 253-268 (PEGRTRKPNKPSDKLI) the composition is skewed to basic and acidic residues. Residues 269–278 (VRRRRTGKKR) show a composition bias toward basic residues.

Belongs to the universal ribosomal protein uL2 family. As to quaternary structure, part of the 50S ribosomal subunit. Forms a bridge to the 30S subunit in the 70S ribosome.

Functionally, one of the primary rRNA binding proteins. Required for association of the 30S and 50S subunits to form the 70S ribosome, for tRNA binding and peptide bond formation. It has been suggested to have peptidyltransferase activity; this is somewhat controversial. Makes several contacts with the 16S rRNA in the 70S ribosome. This is Large ribosomal subunit protein uL2 from Mycolicibacterium smegmatis (strain ATCC 700084 / mc(2)155) (Mycobacterium smegmatis).